The chain runs to 389 residues: D-alanyl-D-alanine carboxypeptidase DacF (389 aa).

Positions 1–23 are cleaved as a signal peptide; sequence MKRLLSTLLIGIMLLTFAPSAFA. Serine 64 (acyl-ester intermediate) is an active-site residue. The active-site Proton acceptor is the lysine 67. Residue serine 124 is part of the active site. A substrate-binding site is contributed by lysine 230.

Belongs to the peptidase S11 family.

Its subcellular location is the secreted. The catalysed reaction is Preferential cleavage: (Ac)2-L-Lys-D-Ala-|-D-Ala. Also transpeptidation of peptidyl-alanyl moieties that are N-acyl substituents of D-alanine.. It participates in cell wall biogenesis; peptidoglycan biosynthesis. In terms of biological role, removes C-terminal D-alanyl residues from sugar-peptide cell wall precursors. The sequence is that of D-alanyl-D-alanine carboxypeptidase DacF (dacF) from Bacillus subtilis (strain 168).